Consider the following 113-residue polypeptide: MRHYEIVLMIHTDQSDQISNIIEHYTKMIKINKGSIHRLEDWGRRQLAYPIKKLNKAHYILMNIETSTKVLNNIIQDLNLNNFIIRNMIMRVKNAINEPSPMKKTKENKELNN.

The protein belongs to the bacterial ribosomal protein bS6 family.

In terms of biological role, binds together with bS18 to 16S ribosomal RNA. The sequence is that of Small ribosomal subunit protein bS6 from Wigglesworthia glossinidia brevipalpis.